We begin with the raw amino-acid sequence, 205 residues long: MIGKLKGVIDEIAEDHAVIDVHGVGYVAFCSARTLGNLGGAGEAAILFIETYVREDMIRLYGFATQLEREWFRLLQNVQGVGAKVALAVLGTLSPSELANAIALRDIAMVSRAPGVGKKVAERIVTELKNKAPAFAGEASGTIGLKQELGAGAAPAPVADAVSALSNLGYSRDQAANAVAAALKETGEGADSAKLIRLGLKELSQ.

The domain I stretch occupies residues methionine 1–alanine 64. The interval threonine 65–isoleucine 143 is domain II. The interval glycine 144 to glycine 152 is flexible linker. Residues alanine 153–glutamine 205 form a domain III region.

The protein belongs to the RuvA family. Homotetramer. Forms an RuvA(8)-RuvB(12)-Holliday junction (HJ) complex. HJ DNA is sandwiched between 2 RuvA tetramers; dsDNA enters through RuvA and exits via RuvB. An RuvB hexamer assembles on each DNA strand where it exits the tetramer. Each RuvB hexamer is contacted by two RuvA subunits (via domain III) on 2 adjacent RuvB subunits; this complex drives branch migration. In the full resolvosome a probable DNA-RuvA(4)-RuvB(12)-RuvC(2) complex forms which resolves the HJ.

It is found in the cytoplasm. Its function is as follows. The RuvA-RuvB-RuvC complex processes Holliday junction (HJ) DNA during genetic recombination and DNA repair, while the RuvA-RuvB complex plays an important role in the rescue of blocked DNA replication forks via replication fork reversal (RFR). RuvA specifically binds to HJ cruciform DNA, conferring on it an open structure. The RuvB hexamer acts as an ATP-dependent pump, pulling dsDNA into and through the RuvAB complex. HJ branch migration allows RuvC to scan DNA until it finds its consensus sequence, where it cleaves and resolves the cruciform DNA. The sequence is that of Holliday junction branch migration complex subunit RuvA from Brucella abortus (strain S19).